The sequence spans 910 residues: Protein translocase subunit SecA 1 (910 aa).

ATP is bound by residues Q86, 104–108 (GEGKT), and D512. The Zn(2+) site is built by C894, C896, C905, and H906.

It belongs to the SecA family. In terms of assembly, monomer and homodimer. Part of the essential Sec protein translocation apparatus which comprises SecA, SecYEG and auxiliary proteins SecDF-YajC and YidC. It depends on Zn(2+) as a cofactor.

Its subcellular location is the cell inner membrane. The protein localises to the cytoplasm. The catalysed reaction is ATP + H2O + cellular proteinSide 1 = ADP + phosphate + cellular proteinSide 2.. Its function is as follows. Part of the Sec protein translocase complex. Interacts with the SecYEG preprotein conducting channel. Has a central role in coupling the hydrolysis of ATP to the transfer of proteins into and across the cell membrane, serving both as a receptor for the preprotein-SecB complex and as an ATP-driven molecular motor driving the stepwise translocation of polypeptide chains across the membrane. This chain is Protein translocase subunit SecA 1, found in Bordetella avium (strain 197N).